The following is a 200-amino-acid chain: Protein GrpE (200 aa).

Residues Met1–Asn11 show a composition bias toward polar residues. The tract at residues Met1–Ala29 is disordered.

It belongs to the GrpE family. As to quaternary structure, homodimer.

It is found in the cytoplasm. Its function is as follows. Participates actively in the response to hyperosmotic and heat shock by preventing the aggregation of stress-denatured proteins, in association with DnaK and GrpE. It is the nucleotide exchange factor for DnaK and may function as a thermosensor. Unfolded proteins bind initially to DnaJ; upon interaction with the DnaJ-bound protein, DnaK hydrolyzes its bound ATP, resulting in the formation of a stable complex. GrpE releases ADP from DnaK; ATP binding to DnaK triggers the release of the substrate protein, thus completing the reaction cycle. Several rounds of ATP-dependent interactions between DnaJ, DnaK and GrpE are required for fully efficient folding. The polypeptide is Protein GrpE (Shewanella halifaxensis (strain HAW-EB4)).